Consider the following 716-residue polypeptide: Interleukin-31 receptor subunit alpha (716 aa).

The signal sequence occupies residues 1-18; that stretch reads MWTLALWAFSFLCKFSLA. At 19 to 499 the chain is on the extracellular side; sequence VLPTKPENIS…TNGVRINFKT (481 aa). Fibronectin type-III domains lie at 23–115, 117–211, 213–304, 305–403, and 408–502; these read KPEN…IAKT, PPII…TMEE, PHVL…ILRI, PDVH…QAYA, and PLKG…TLSI. Asn-36, Asn-48, and Asn-64 each carry an N-linked (GlcNAc...) asparagine glycan. An N-linked (GlcNAc...) asparagine glycan is attached at Asn-382. Residues 500–520 traverse the membrane as a helical segment; it reads LSISVFEIVLLTSLVGGGLLL. The Cytoplasmic portion of the chain corresponds to 521–716; that stretch reads LSIKTVTFGL…NIPEHSKGEV (196 aa). Disordered regions lie at residues 622–641 and 648–696; these read EYVTSPSRPDGPPGKSFKEP and ASED…LKNS. A compositionally biased stretch (polar residues) spans 670 to 679; sequence QPSSSCQSPG.

Belongs to the type I cytokine receptor family. Type 2 subfamily. Heterodimer with OSMR. Interacts with JAK1 and STAT3. In terms of processing, N-glycosylated. In terms of tissue distribution, expressed in a subset of dorsal root ganglia neurons. Expressed in spinal cord and trigeminal ganglion (at protein level). Expressed in skin, testis, bone marrow and thymus.

Its subcellular location is the cell membrane. It is found in the presynaptic cell membrane. The protein localises to the cell projection. The protein resides in the axon. Its function is as follows. Associates with OSMR to form the interleukin-31 receptor which activates STAT3 and to a lower extent STAT1 and STAT5. May function in skin immunity. Mediates IL31-induced itch, probably in a manner dependent on cation channels TRPA1 and TRPV1. Positively regulates numbers and cycling status of immature subsets of myeloid progenitor cells in bone marrow in vivo and enhances myeloid progenitor cell survival in vitro. This chain is Interleukin-31 receptor subunit alpha (Il31ra), found in Mus musculus (Mouse).